Here is a 256-residue protein sequence, read N- to C-terminus: MSDVARILKEARDQGRLTALDFAKEIFDDFIELHGDRNFRDDGAVIGGIGRLNGQAVTVVGIQKGKNLQDNLNRNFGQPHPEGYRKALRLMKQAEKFGRPVVTFINTAGAYPGVGAEERGQGEAIARNLMEMSDLKVPIIAIIIGEGGSGGALALAVADKVWMLENTIYSILSPEGFATILWKDGSRSEEAAELMKITSGELLNMGIVDKVIPERGYFTSEIIEAIKTAIVDELAELSQLSTEDLLEARYQRFRKY.

A CoA carboxyltransferase C-terminal domain is found at 1 to 236 (MSDVARILKE…KTAIVDELAE (236 aa)).

Belongs to the AccA family. In terms of assembly, acetyl-CoA carboxylase is a heterohexamer composed of biotin carboxyl carrier protein (AccB), biotin carboxylase (AccC) and two subunits each of ACCase subunit alpha (AccA) and ACCase subunit beta (AccD).

It localises to the cytoplasm. It carries out the reaction N(6)-carboxybiotinyl-L-lysyl-[protein] + acetyl-CoA = N(6)-biotinyl-L-lysyl-[protein] + malonyl-CoA. Its pathway is lipid metabolism; malonyl-CoA biosynthesis; malonyl-CoA from acetyl-CoA: step 1/1. Component of the acetyl coenzyme A carboxylase (ACC) complex. First, biotin carboxylase catalyzes the carboxylation of biotin on its carrier protein (BCCP) and then the CO(2) group is transferred by the carboxyltransferase to acetyl-CoA to form malonyl-CoA. This chain is Acetyl-coenzyme A carboxylase carboxyl transferase subunit alpha, found in Streptococcus thermophilus (strain ATCC BAA-491 / LMD-9).